Reading from the N-terminus, the 840-residue chain is OTU domain-containing protein 7B (840 aa).

The interval 49 to 88 (AGNLSPPFSGGSTCPKTPEKGGSDREPTRPSRPILQRQDD) is disordered. Residues 65–77 (TPEKGGSDREPTR) are compositionally biased toward basic and acidic residues. A Phosphoserine modification is found at Ser100. Positions 152–401 (ERDLIEQSML…AVDPGKGWEW (250 aa)) are TRAF-binding. The interval 167–440 (AGRLNWWVSM…VKWIPLSSDS (274 aa)) is catalytic. Positions 183–365 (LLPLATTGDG…QAHFSALVSM (183 aa)) constitute an OTU domain. Positions 187 to 193 (ATTGDGN) are regulatory loop. The active site involves Asp191. The active-site Nucleophile is the Cys194. Residue His358 is the Proton acceptor of the active site. Polar residues predominate over residues 440–452 (SQAPLAQPESPTA). Disordered stretches follow at residues 440 to 592 (SQAP…YSQE) and 653 to 710 (IMNG…VHCQ). Composition is skewed to basic and acidic residues over residues 456-471 (DEPRSTPESGESDKES) and 488-500 (SKRDREKDKKRAD). Phosphoserine is present on residues Ser464, Ser467, and Ser471. The short motif at 483–498 (RRKEKSKRDREKDKKR) is the Nuclear localization signal element. Residues 531–541 (KPGGLGSGSGI) show a composition bias toward gly residues. Residue Thr730 is modified to Phosphothreonine. The segment at 793–828 (PPTQTKCKQPNCSFYGHPETNNLCSCCYREELRRRE) adopts an A20-type zinc-finger fold. Residues Cys799, Cys804, Cys816, and Cys819 each coordinate Zn(2+).

Belongs to the peptidase C64 family. Interacts with TRAF6. Interacts with PARK7, leading to inhibit deubiquitinase activity. Interacts with EGFR, ITCH and NEDD4. Interacts with TRAF3. Interacts with ZAP70 in activated T cells, but not in resting T cells. In terms of processing, phosphorylated by EGFR.

Its subcellular location is the cytoplasm. The protein localises to the nucleus. The catalysed reaction is Thiol-dependent hydrolysis of ester, thioester, amide, peptide and isopeptide bonds formed by the C-terminal Gly of ubiquitin (a 76-residue protein attached to proteins as an intracellular targeting signal).. With respect to regulation, deubiquitinase activity is inhibited following interaction with PARK7. Its function is as follows. Negative regulator of the non-canonical NF-kappa-B pathway that acts by mediating deubiquitination of TRAF3, an inhibitor of the NF-kappa-B pathway, thereby acting as a negative regulator of B-cell responses. In response to non-canonical NF-kappa-B stimuli, deubiquitinates 'Lys-48'-linked polyubiquitin chains of TRAF3, preventing TRAF3 proteolysis and over-activation of non-canonical NF-kappa-B. Negatively regulates mucosal immunity against infections. Deubiquitinates ZAP70, and thereby regulates T cell receptor (TCR) signaling that leads to the activation of NF-kappa-B. Plays a role in T cell homeostasis and is required for normal T cell responses, including production of IFNG and IL2. Mediates deubiquitination of EGFR. Has deubiquitinating activity toward 'Lys-11', 'Lys-48' and 'Lys-63'-linked polyubiquitin chains. Has a much higher catalytic rate with 'Lys-11'-linked polyubiquitin chains (in vitro); however the physiological significance of these data are unsure. Hydrolyzes both linear and branched forms of polyubiquitin. Acts as a regulator of mTORC1 and mTORC2 assembly by mediating 'Lys-63'-linked deubiquitination of MLST8, thereby promoting assembly of the mTORC2 complex, while inibiting formation of the mTORC1 complex. This chain is OTU domain-containing protein 7B (Otud7b), found in Mus musculus (Mouse).